A 395-amino-acid polypeptide reads, in one-letter code: Phosphoglycerate kinase (395 aa).

Residues 21–23, Arg36, 59–62, Arg120, and Arg153 each bind substrate; these read DFN and HLGR. ATP-binding positions include Lys203, Glu325, and 351-354; that span reads GGDS.

This sequence belongs to the phosphoglycerate kinase family. In terms of assembly, monomer.

The protein resides in the cytoplasm. It carries out the reaction (2R)-3-phosphoglycerate + ATP = (2R)-3-phospho-glyceroyl phosphate + ADP. The protein operates within carbohydrate degradation; glycolysis; pyruvate from D-glyceraldehyde 3-phosphate: step 2/5. This chain is Phosphoglycerate kinase, found in Roseiflexus sp. (strain RS-1).